The following is a 272-amino-acid chain: Putative G-protein coupled receptor GPR32P1 (272 aa).

Residues M1–S24 are disordered. Residues M1–T46 lie on the Extracellular side of the membrane. N-linked (GlcNAc...) asparagine glycosylation occurs at N30. The helical transmembrane segment at M47–V67 threads the bilayer. Residues T68–T78 are Cytoplasmic-facing. A helical membrane pass occupies residues V79–V99. Residues Y100–L116 lie on the Extracellular side of the membrane. Residues C114 and C191 are joined by a disulfide bond. The chain crosses the membrane as a helical span at residues Y117 to V137. Residues D138–A158 are Cytoplasmic-facing. A helical transmembrane segment spans residues S159 to F179. Residues R180–Q213 lie on the Extracellular side of the membrane. N-linked (GlcNAc...) asparagine glycosylation occurs at N199. A helical transmembrane segment spans residues M214 to T234. The Cytoplasmic segment spans residues C235–T272.

Belongs to the G-protein coupled receptor 1 family.

The protein localises to the cell membrane. Its function is as follows. Orphan receptor. The protein is Putative G-protein coupled receptor GPR32P1 (GPR32P1) of Homo sapiens (Human).